An 853-amino-acid polypeptide reads, in one-letter code: Stachyose synthase (853 aa).

The propeptide occupies 1 to 11 (MAPPLNSTTSN).

The protein belongs to the glycosyl hydrolases 36 family.

The protein localises to the cytoplasm. It carries out the reaction alpha-D-galactosyl-(1-&gt;3)-1D-myo-inositol + raffinose = stachyose + myo-inositol. The protein operates within glycan metabolism; stachyose biosynthesis; stachyose from raffinose: step 1/1. Catalyzes stachyose synthesis by transfer of a galactosyl moiety from galactinol to raffinose. Also catalyzes verbascose synthesis by galactosyl transfer from galactinol to stachyose or from one stachyose molecule to another. Oligosaccharides of the raffinose family play a protective role in maturation drying of seeds. They may act as cryoprotectants in frost-hardy plants. The sequence is that of Stachyose synthase (STS1) from Pisum sativum (Garden pea).